The following is a 516-amino-acid chain: Putative glucosylceramidase 2 (516 aa).

The N-terminal stretch at 1-23 (MSIAWSCFVLGLFALASLQVALA) is a signal peptide. Glu254 (proton donor) is an active-site residue. Glu358 functions as the Nucleophile in the catalytic mechanism.

Belongs to the glycosyl hydrolase 30 family.

It catalyses the reaction a beta-D-glucosylceramide + H2O = an N-acyl-sphingoid base + D-glucose. The catalysed reaction is a beta-D-glucosyl-(1&lt;-&gt;1')-N-acylsphing-4-enine + H2O = an N-acylsphing-4-enine + D-glucose. The enzyme catalyses an N-acyl-1-beta-D-glucosyl-15-methylhexadecasphing-4-enine + H2O = an N-acyl-15-methylhexadecasphing-4-enine + D-glucose. It functions in the pathway lipid metabolism; sphingolipid metabolism. Its function is as follows. Glucosylceramidase that catalyzes the hydrolysis of glucosylceramides into free ceramides and glucose. C.elegans contain specific sphingoid bases, which are unique or different in structure compared to the sphingoid bases found in other animals. Two examples of these distinctive compounds are: 15-methylhexadecasphinganine and 15-methylhexadecasphing-4-enine. This is Putative glucosylceramidase 2 (gba-2) from Caenorhabditis elegans.